Consider the following 311-residue polypeptide: Delta(1)-pyrroline-2-carboxylate reductase 2 (311 aa).

It belongs to the ornithine cyclodeaminase/mu-crystallin family.

The enzyme catalyses L-proline + NAD(+) = 1-pyrroline-2-carboxylate + NADH + H(+). The catalysed reaction is L-proline + NADP(+) = 1-pyrroline-2-carboxylate + NADPH + H(+). Its function is as follows. Catalyzes the reduction of Delta(1)-pyrroline-2-carboxylate (Pyr2C) to L-proline, using preferentially NADPH over NADH as the electron donor. May be involved in a degradation pathway that converts trans-3-hydroxy-L-proline (t3LHyp) to L-proline. The chain is Delta(1)-pyrroline-2-carboxylate reductase 2 from Burkholderia ambifaria (strain ATCC BAA-244 / DSM 16087 / CCUG 44356 / LMG 19182 / AMMD) (Burkholderia cepacia (strain AMMD)).